The sequence spans 126 residues: Methylglyoxal synthase (126 aa).

The MGS-like domain occupies 1–126 (MAGSKCLALI…AIKLLPTLEA (126 aa)). Residues His-12, Lys-16, 38-41 (TGTT), and 59-60 (SG) each bind substrate. Asp-65 functions as the Proton donor/acceptor in the catalytic mechanism. His-92 is a substrate binding site.

Belongs to the methylglyoxal synthase family.

The enzyme catalyses dihydroxyacetone phosphate = methylglyoxal + phosphate. Catalyzes the formation of methylglyoxal from dihydroxyacetone phosphate. This chain is Methylglyoxal synthase, found in Rhizobium etli (strain ATCC 51251 / DSM 11541 / JCM 21823 / NBRC 15573 / CFN 42).